We begin with the raw amino-acid sequence, 675 residues long: Regulator of G-protein signaling 9 (675 aa).

A DEP domain is found at 30 to 105 (PETGVRMHNQ…PDSSLYRFQT (76 aa)). A G protein gamma domain is found at 222–283 (VRKEIMYYQQ…DTQFWDLNAK (62 aa)). An RGS domain is found at 299–414 (NFSELIRDPK…LKSPIYKEML (116 aa)). 2 disordered regions span residues 524 to 571 (RVAL…PPKA) and 637 to 662 (DSGT…EKEV). Polar residues predominate over residues 542–551 (SGANSGPSVT). Basic and acidic residues-rich tracts occupy residues 552-562 (ENREPSADHSR) and 646-662 (DDPR…EKEV).

Heterodimer with GNB5. Interacts with RGS7BP, leading to regulate the subcellular location of the heterodimer formed with GNB5. Component of the RGS9-1-Gbeta5 complex composed of RGS9 (RGS9-1), Gbeta5 (GNB5) and RGS9BP. Interacts with PDE6G and GNAT1. Post-translationally, retinal isoform 1 is light-dependent phosphorylated at 'Ser-475'. Phosphorylation is decreased by light exposition. Interaction with RGS9BP is decreased when isoform 1 is phosphorylated at 'Ser-475'. As to expression, isoform 1 is expressed in photoreceptor outer segments. Isoform 2 is expressed in brain striatum.

It is found in the membrane. Functionally, inhibits signal transduction by increasing the GTPase activity of G protein alpha subunits thereby driving them into their inactive GDP-bound form. Binds to GNAT1. Involved in phototransduction; key element in the recovery phase of visual transduction. This Mus musculus (Mouse) protein is Regulator of G-protein signaling 9 (Rgs9).